The sequence spans 122 residues: Small ribosomal subunit protein bS6 (122 aa).

Positions 96–122 (ETAPSPMMKAVQKEDAAKSHRTEAPAA) are disordered. Positions 106 to 122 (VQKEDAAKSHRTEAPAA) are enriched in basic and acidic residues.

Belongs to the bacterial ribosomal protein bS6 family.

Functionally, binds together with bS18 to 16S ribosomal RNA. In Herminiimonas arsenicoxydans, this protein is Small ribosomal subunit protein bS6.